The primary structure comprises 272 residues: AA9 family lytic polysaccharide monooxygenase G (272 aa).

The first 22 residues, 1-22 (MKGAGSASFLLTLLSTITRTSA), serve as a signal peptide directing secretion. His23 provides a ligand contact to Cu(2+). An N-linked (GlcNAc...) asparagine glycan is attached at Asn60. 2 cysteine pairs are disulfide-bonded: Cys78–Cys202 and Cys121–Cys125. His110 lines the Cu(2+) pocket. Residues His188 and Gln197 each coordinate O2. Tyr199 is a binding site for Cu(2+).

The protein belongs to the polysaccharide monooxygenase AA9 family. The cofactor is Cu(2+).

The protein resides in the secreted. The enzyme catalyses [(1-&gt;4)-beta-D-glucosyl]n+m + reduced acceptor + O2 = 4-dehydro-beta-D-glucosyl-[(1-&gt;4)-beta-D-glucosyl]n-1 + [(1-&gt;4)-beta-D-glucosyl]m + acceptor + H2O.. In terms of biological role, lytic polysaccharide monooxygenase (LPMO) that depolymerizes crystalline and amorphous polysaccharides via the oxidation of scissile alpha- or beta-(1-4)-glycosidic bonds, yielding C1 or C4 oxidation products. Catalysis by LPMOs requires the reduction of the active-site copper from Cu(II) to Cu(I) by a reducing agent and H(2)O(2) or O(2) as a cosubstrate. Acts preferentially on crystalline regions of cellulose such as highly crystalline algae cellulose. In Emericella nidulans (strain FGSC A4 / ATCC 38163 / CBS 112.46 / NRRL 194 / M139) (Aspergillus nidulans), this protein is AA9 family lytic polysaccharide monooxygenase G.